A 1567-amino-acid chain; its full sequence is Putative DEAH-box ATP-dependent helicase UM11114 (1567 aa).

2 disordered regions span residues 1-95 (MAPR…PGSK) and 670-734 (ESSV…ETRR). Residues 10-20 (IKSSGTTSSKA) are compositionally biased toward polar residues. 2 stretches are compositionally biased toward low complexity: residues 39–48 (TKAAKQQQTQ) and 55–73 (AISA…AASS). Gly residues predominate over residues 74 to 83 (AGGGGGGGQG). Polar residues-rich tracts occupy residues 670–687 (ESSV…TPTG) and 713–726 (LQRQ…SPSY). The 179-residue stretch at 746–924 (LGLIRSNRVV…FGKAPCISIP (179 aa)) folds into the Helicase ATP-binding domain. Residue 759–766 (GETGCGKT) coordinates ATP. The DEAH box signature appears at 871 to 874 (DEVH). The 182-residue stretch at 1003–1184 (VVRYVVERAE…SLFLEVKSMR (182 aa)) folds into the Helicase C-terminal domain.

It belongs to the DEAD box helicase family. DEAH subfamily.

This is Putative DEAH-box ATP-dependent helicase UM11114 from Mycosarcoma maydis (Corn smut fungus).